The sequence spans 23 residues: Major prohead-scaffolding core protein Gp22 (23 aa).

Positions 1-23 are disordered; sequence KAEEEVEKNKEEAEEKAEKKIAE. Basic and acidic residues predominate over residues 7–23; it reads EKNKEEAEEKAEKKIAE.

Functionally, gp22 functions in head assembly. In terms of biological role, internal peptide VII: Cleavage product of Gp22 that is incorporated into the mature phage head. This chain is Major prohead-scaffolding core protein Gp22 (22), found in Enterobacteria phage T6 (Bacteriophage T6).